Consider the following 187-residue polypeptide: GTP cyclohydrolase 1 (187 aa).

Zn(2+) is bound by residues C76, H79, and C148.

The protein belongs to the GTP cyclohydrolase I family. Toroid-shaped homodecamer, composed of two pentamers of five dimers.

It catalyses the reaction GTP + H2O = 7,8-dihydroneopterin 3'-triphosphate + formate + H(+). Its pathway is cofactor biosynthesis; 7,8-dihydroneopterin triphosphate biosynthesis; 7,8-dihydroneopterin triphosphate from GTP: step 1/1. The sequence is that of GTP cyclohydrolase 1 from Streptococcus suis (strain 98HAH33).